The sequence spans 306 residues: tRNA dimethylallyltransferase (306 aa).

9–16 (GPTAIGKT) lines the ATP pocket. 11–16 (TAIGKT) is a substrate binding site. An interaction with substrate tRNA region spans residues 34-37 (DSMQ).

Belongs to the IPP transferase family. As to quaternary structure, monomer. It depends on Mg(2+) as a cofactor.

The enzyme catalyses adenosine(37) in tRNA + dimethylallyl diphosphate = N(6)-dimethylallyladenosine(37) in tRNA + diphosphate. Its function is as follows. Catalyzes the transfer of a dimethylallyl group onto the adenine at position 37 in tRNAs that read codons beginning with uridine, leading to the formation of N6-(dimethylallyl)adenosine (i(6)A). In Lactobacillus helveticus (strain DPC 4571), this protein is tRNA dimethylallyltransferase.